An 82-amino-acid chain; its full sequence is Sec-independent protein translocase protein TatA (82 aa).

Residues 1 to 21 traverse the membrane as a helical segment; sequence MHPPSITQLLIILLIIVLLFG. Positions 42 to 82 are disordered; that stretch reads AVKEDEEDNQSEENTKSQIKQSESKNENVSKTHTDSQKQDT. The segment covering 63-82 has biased composition (basic and acidic residues); sequence SESKNENVSKTHTDSQKQDT.

It belongs to the TatA/E family. In terms of assembly, the Tat system comprises two distinct complexes: a TatABC complex, containing multiple copies of TatA, TatB and TatC subunits, and a separate TatA complex, containing only TatA subunits. Substrates initially bind to the TatABC complex, which probably triggers association of the separate TatA complex to form the active translocon.

The protein localises to the cell inner membrane. Its function is as follows. Part of the twin-arginine translocation (Tat) system that transports large folded proteins containing a characteristic twin-arginine motif in their signal peptide across membranes. TatA could form the protein-conducting channel of the Tat system. This Helicobacter hepaticus (strain ATCC 51449 / 3B1) protein is Sec-independent protein translocase protein TatA.